Consider the following 95-residue polypeptide: MDMRKLNTSQGRNLTTVDDRRRFSIGWETWDDGGESLYDVTNNGTTVINTTACVSSCSHTSLVLCNMTQQTDSLYGVGHRLNDEEDGELWRVSVS.

In Homo sapiens (Human), this protein is Protein RL5A (RL5A).